The sequence spans 196 residues: Adenylate kinase (196 aa).

Residue 9–17 (GIPGVGKST) coordinates ATP.

It belongs to the archaeal adenylate kinase family.

The protein localises to the cytoplasm. The enzyme catalyses AMP + ATP = 2 ADP. The sequence is that of Adenylate kinase from Pyrococcus furiosus (strain ATCC 43587 / DSM 3638 / JCM 8422 / Vc1).